Here is a 324-residue protein sequence, read N- to C-terminus: Viral cathepsin (324 aa).

A signal peptide spans 1–18 (MNKIVLYLLIYVGTFSAA). The propeptide at 19–113 (YDLLKAPSYF…VVLNRPPDKG (95 aa)) is activation peptide. 3 disulfide bridges follow: Cys134–Cys175, Cys168–Cys208, and Cys263–Cys311. Cys137 is a catalytic residue. N-linked (GlcNAc...) asparagine; by host glycosylation is present at Asn159. Catalysis depends on residues His270 and Asn290.

This sequence belongs to the peptidase C1 family. In terms of processing, synthesized as an inactive proenzyme and activated by proteolytic removal of the inhibitory propeptide.

The catalysed reaction is Endopeptidase of broad specificity, hydrolyzing substrates of both cathepsin L and cathepsin B.. Its function is as follows. Cysteine protease that plays an essential role in host liquefaction to facilitate horizontal transmission of the virus. May participate in the degradation of foreign protein expressed by the baculovirus system. In Choristoneura fumiferana defective polyhedrosis virus (Cfdef), this protein is Viral cathepsin (Vcath).